A 374-amino-acid polypeptide reads, in one-letter code: Zinc finger CCCH domain-containing protein 15 homolog (374 aa).

The segment at 1–20 (MPPKQQGPSKKSEQKRKEKV) is disordered. Basic and acidic residues predominate over residues 10–20 (KKSEQKRKEKV). 2 C3H1-type zinc fingers span residues 90 to 117 (DPKS…HDLA) and 166 to 199 (VCKY…HCLP).

The protein belongs to the ZC3H15/TMA46 family.

The polypeptide is Zinc finger CCCH domain-containing protein 15 homolog (Caenorhabditis elegans).